Consider the following 196-residue polypeptide: Small ribosomal subunit protein uS4c (196 aa).

The segment at 16–36 (GALPGLTRKTPKSGSNLKKKF) is disordered. The region spanning 89-169 (MRLDNILFRL…LPKHLTIDTL (81 aa)) is the S4 RNA-binding domain.

It belongs to the universal ribosomal protein uS4 family. Part of the 30S ribosomal subunit. Contacts protein S5. The interaction surface between S4 and S5 is involved in control of translational fidelity.

The protein localises to the plastid. The protein resides in the chloroplast. Functionally, one of the primary rRNA binding proteins, it binds directly to 16S rRNA where it nucleates assembly of the body of the 30S subunit. Its function is as follows. With S5 and S12 plays an important role in translational accuracy. In Cinna latifolia (Drooping woodreed), this protein is Small ribosomal subunit protein uS4c (rps4).